A 508-amino-acid polypeptide reads, in one-letter code: Histidine ammonia-lyase (508 aa).

A cross-link (5-imidazolinone (Ala-Gly)) is located at residues 139–141 (ASG). A 2,3-didehydroalanine (Ser) modification is found at S140.

Belongs to the PAL/histidase family. Contains an active site 4-methylidene-imidazol-5-one (MIO), which is formed autocatalytically by cyclization and dehydration of residues Ala-Ser-Gly.

It localises to the cytoplasm. The enzyme catalyses L-histidine = trans-urocanate + NH4(+). It functions in the pathway amino-acid degradation; L-histidine degradation into L-glutamate; N-formimidoyl-L-glutamate from L-histidine: step 1/3. This chain is Histidine ammonia-lyase, found in Acidiphilium cryptum (strain JF-5).